Consider the following 345-residue polypeptide: Molybdate/tungstate-binding protein WtpA (345 aa).

Residues 1-27 (MREGGVMKKRLLALIVAFAVLTAGCLG) form the signal peptide. Molybdate contacts are provided by residues 41 to 42 (GS), S75, 160 to 162 (DPC), E218, and Y236. Tungstate-binding positions include 41–42 (GS), S75, 160–162 (DPC), E218, and Y236.

Belongs to the bacterial solute-binding protein 1 family. WtpA subfamily. Monomer. The complex is composed of two ATP-binding proteins (WtpC), two transmembrane proteins (WtpB) and a solute-binding protein (WtpA).

The protein localises to the cell membrane. Functionally, part of the ABC transporter complex WtpABC involved in molybdate/tungstate import. Binds tungstate and molybdate, with a preference for tungstate. The chain is Molybdate/tungstate-binding protein WtpA from Pyrococcus furiosus (strain ATCC 43587 / DSM 3638 / JCM 8422 / Vc1).